We begin with the raw amino-acid sequence, 616 residues long: Chaperone protein HscA (616 aa).

This sequence belongs to the heat shock protein 70 family.

Chaperone involved in the maturation of iron-sulfur cluster-containing proteins. Has a low intrinsic ATPase activity which is markedly stimulated by HscB. Involved in the maturation of IscU. The protein is Chaperone protein HscA of Escherichia coli O6:H1 (strain CFT073 / ATCC 700928 / UPEC).